The following is a 213-amino-acid chain: MELNVMDHPLVSHKLTLLRSVDTPSPVFRQLVEELVTLMAYEGTREVRIEPTTVTTPLTATEGVALTRPKPLVVPILRAGLGMLEGMMRLIPSAEVGFVGMARDEETLQPMTYAERLPKDLSGRQCYVLDPMLATGGSLGGTVEFLVRRGADHITCLCILAAPEGIENFRKLVRDLDVPCHLIVAGLDDHLDEHGYIVPGLGDAGDRLYGLAE.

Residues arginine 78, arginine 103, and 130–138 (DPMLATGGS) each bind 5-phospho-alpha-D-ribose 1-diphosphate. Residues isoleucine 197 and 202–204 (GDA) each bind uracil. 5-phospho-alpha-D-ribose 1-diphosphate is bound at residue aspartate 203.

This sequence belongs to the UPRTase family. Mg(2+) is required as a cofactor.

The enzyme catalyses UMP + diphosphate = 5-phospho-alpha-D-ribose 1-diphosphate + uracil. The protein operates within pyrimidine metabolism; UMP biosynthesis via salvage pathway; UMP from uracil: step 1/1. Its activity is regulated as follows. Allosterically activated by GTP. Functionally, catalyzes the conversion of uracil and 5-phospho-alpha-D-ribose 1-diphosphate (PRPP) to UMP and diphosphate. In Cutibacterium acnes (strain DSM 16379 / KPA171202) (Propionibacterium acnes), this protein is Uracil phosphoribosyltransferase.